The primary structure comprises 206 residues: VEL1-related protein YOR387C (206 aa).

Residues 1-19 (MSFLNIFTFFSVLVSVATA) form the signal peptide. 6 N-linked (GlcNAc...) asparagine glycosylation sites follow: Asn-26, Asn-48, Asn-91, Asn-139, Asn-152, and Asn-183.

Belongs to the VEL1 family. Post-translationally, N-glycosylated.

It is found in the cytoplasm. It localises to the cytosol. The sequence is that of VEL1-related protein YOR387C from Saccharomyces cerevisiae (strain ATCC 204508 / S288c) (Baker's yeast).